Consider the following 103-residue polypeptide: Large ribosomal subunit protein uL24 (103 aa).

The protein belongs to the universal ribosomal protein uL24 family. As to quaternary structure, part of the 50S ribosomal subunit.

One of two assembly initiator proteins, it binds directly to the 5'-end of the 23S rRNA, where it nucleates assembly of the 50S subunit. In terms of biological role, one of the proteins that surrounds the polypeptide exit tunnel on the outside of the subunit. The protein is Large ribosomal subunit protein uL24 of Pasteurella multocida (strain Pm70).